The chain runs to 146 residues: Hemoglobin subunit beta (146 aa).

Val-1 carries the post-translational modification N-acetylvaline. The Globin domain maps to 2–146 (HLTAEEKSAV…VANALAHKYH (145 aa)). Residue Ser-44 is modified to Phosphoserine. Residue Lys-59 is modified to N6-acetyllysine. His-63 serves as a coordination point for heme b. Lys-82 bears the N6-acetyllysine mark. A heme b-binding site is contributed by His-92. Residue Cys-93 is modified to S-nitrosocysteine. Lys-144 bears the N6-acetyllysine mark.

Belongs to the globin family. In terms of assembly, heterotetramer of two alpha chains and two beta chains. In terms of tissue distribution, red blood cells.

Functionally, involved in oxygen transport from the lung to the various peripheral tissues. The chain is Hemoglobin subunit beta from Tamias merriami (Merriam's chipmunk).